A 751-amino-acid polypeptide reads, in one-letter code: Transposable element P transposase (751 aa).

The segment at Met-1–Val-77 adopts a THAP-type zinc-finger fold.

P-element transposase that specifically mediates transposition of P-elements. Mediates both; precise and imprecise excision. The protein is Transposable element P transposase of Drosophila melanogaster (Fruit fly).